We begin with the raw amino-acid sequence, 89 residues long: Small ribosomal subunit protein bS20 (89 aa).

This sequence belongs to the bacterial ribosomal protein bS20 family.

In terms of biological role, binds directly to 16S ribosomal RNA. The protein is Small ribosomal subunit protein bS20 of Xanthobacter autotrophicus (strain ATCC BAA-1158 / Py2).